The chain runs to 247 residues: tRNA uridine(34) hydroxylase (247 aa).

One can recognise a Rhodanese domain in the interval 124-218; sequence TKQNVIVIDT…YLEDTHNKNN (95 aa). Catalysis depends on Cys178, which acts as the Cysteine persulfide intermediate.

This sequence belongs to the TrhO family.

It catalyses the reaction uridine(34) in tRNA + AH2 + O2 = 5-hydroxyuridine(34) in tRNA + A + H2O. Catalyzes oxygen-dependent 5-hydroxyuridine (ho5U) modification at position 34 in tRNAs. This is tRNA uridine(34) hydroxylase from Rickettsia typhi (strain ATCC VR-144 / Wilmington).